Here is a 375-residue protein sequence, read N- to C-terminus: Histidine biosynthesis bifunctional protein HisB (375 aa).

The histidinol-phosphatase stretch occupies residues M1–P168. D8 acts as the Nucleophile in catalysis. Positions 8, 10, and 128 each coordinate Mg(2+). The Proton donor role is filled by D10. An imidazoleglycerol-phosphate dehydratase region spans residues R169–L375.

This sequence in the N-terminal section; belongs to the histidinol-phosphatase family. In the C-terminal section; belongs to the imidazoleglycerol-phosphate dehydratase family. Mg(2+) serves as cofactor.

The protein localises to the cytoplasm. The enzyme catalyses D-erythro-1-(imidazol-4-yl)glycerol 3-phosphate = 3-(imidazol-4-yl)-2-oxopropyl phosphate + H2O. It catalyses the reaction L-histidinol phosphate + H2O = L-histidinol + phosphate. The protein operates within amino-acid biosynthesis; L-histidine biosynthesis; L-histidine from 5-phospho-alpha-D-ribose 1-diphosphate: step 6/9. It functions in the pathway amino-acid biosynthesis; L-histidine biosynthesis; L-histidine from 5-phospho-alpha-D-ribose 1-diphosphate: step 8/9. The chain is Histidine biosynthesis bifunctional protein HisB from Xanthomonas euvesicatoria pv. vesicatoria (strain 85-10) (Xanthomonas campestris pv. vesicatoria).